The following is a 657-amino-acid chain: Outer dense fiber protein 2 (657 aa).

2 positions are modified to phosphoserine: Ser-73 and Ser-74. Thr-92 bears the Phosphothreonine mark. Ser-95 is subject to Phosphoserine; by TSSK4. Ser-106 and Ser-109 each carry phosphoserine. Thr-110 carries the phosphothreonine modification. 2 positions are modified to phosphoserine: Ser-115 and Ser-129. A Glycyl lysine isopeptide (Lys-Gly) (interchain with G-Cter in SUMO2) cross-link involves residue Lys-138. Ser-139 carries the phosphoserine modification. 2 coiled-coil regions span residues 144-423 (QKGE…AEQL) and 461-635 (EIIV…SDLR). Position 231 is a phosphothreonine (Thr-231). Phosphoserine occurs at positions 261 and 632.

This sequence belongs to the ODF2 family. Self-associates. Associates with microtubules and forms a fibrillar structure partially linked to the microtubule network. Interacts via its C-terminus with PLK1. Interacts with ODF1. Interacts with MARK4; the interaction is required for localization of ODF2 to centrioles. Interacts with TSSK4. Interacts with AKNA. Interacts with CFAP58. Interacts with BBOF1. Interacts with CCDC38. Interacts with CCDC42. Tyrosine phosphorylated. Phosphorylated on Ser-95 by TSSK4.

It localises to the cytoplasm. Its subcellular location is the cytoskeleton. It is found in the microtubule organizing center. The protein localises to the centrosome. The protein resides in the cell projection. It localises to the cilium. Its subcellular location is the centriole. It is found in the spindle pole. The protein localises to the flagellum. In terms of biological role, seems to be a major component of sperm tail outer dense fibers (ODF). ODFs are filamentous structures located on the outside of the axoneme in the midpiece and principal piece of the mammalian sperm tail and may help to maintain the passive elastic structures and elastic recoil of the sperm tail. May have a modulating influence on sperm motility. Functions as a general scaffold protein that is specifically localized at the distal/subdistal appendages of mother centrioles. Component of the centrosome matrix required for the localization of PLK1 and NIN to the centrosomes. Required for the formation and/or maintenance of normal CETN1 assembly. The sequence is that of Outer dense fiber protein 2 (ODF2) from Bos taurus (Bovine).